A 438-amino-acid polypeptide reads, in one-letter code: Dolichyl-diphosphooligosaccharide--protein glycosyltransferase 48 kDa subunit (438 aa).

An N-terminal signal peptide occupies residues 1–25; the sequence is MASLRLSVLLVSVSWLLLLVSGLRA. Residues 26 to 408 lie on the Lumenal side of the membrane; sequence GPRTLVLMEN…QYERFIPSAY (383 aa). A helical membrane pass occupies residues 409–429; the sequence is PYYASAFSVMFGLFIFSIVFL. Topologically, residues 430-438 are cytoplasmic; the sequence is HMKEKEKSD.

The protein belongs to the DDOST 48 kDa subunit family. Component of the oligosaccharyltransferase (OST) complex.

The protein resides in the endoplasmic reticulum membrane. It participates in protein modification; protein glycosylation. In terms of biological role, subunit of the oligosaccharyl transferase (OST) complex that catalyzes the initial transfer of a defined glycan (Glc(3)Man(9)GlcNAc(2) in eukaryotes) from the lipid carrier dolichol-pyrophosphate to an asparagine residue within an Asn-X-Ser/Thr consensus motif in nascent polypeptide chains, the first step in protein N-glycosylation. N-glycosylation occurs cotranslationally and the complex associates with the Sec61 complex at the channel-forming translocon complex that mediates protein translocation across the endoplasmic reticulum (ER). All subunits are required for a maximal enzyme activity. Required for the assembly of both SST3A- and SS3B-containing OST complexes. This chain is Dolichyl-diphosphooligosaccharide--protein glycosyltransferase 48 kDa subunit, found in Xenopus laevis (African clawed frog).